We begin with the raw amino-acid sequence, 736 residues long: Prolyl 3-hydroxylase 1 (736 aa).

A signal peptide spans 1–22; it reads MAVRALKLLTTLLAVVAAASQA. TPR repeat units lie at residues 35–68, 143–176, 205–238, and 301–334; these read PDLLFAEGTAAYARGDWPGVVLSMERALRSRAAL, RSPYNYLQVAYFKINKLEKAVAAAHTFFVGNPEH, HMQEFRLGVRLYSEEQPQEAVPHLEAALQEYFVA, and PSHYNYLQFAYYNIGNYTQAVECAKTYLLFFPND. The N-linked (GlcNAc...) asparagine glycan is linked to asparagine 316. Positions 401-439 form a coiled coil; the sequence is KRLQEKQKSERETAVRISQEIGNLMKEIETLVEEKTKES. 2 N-linked (GlcNAc...) asparagine glycosylation sites follow: asparagine 467 and asparagine 540. Positions 564–678 constitute a Fe2OG dioxygenase domain; the sequence is SHLVCRTAIE…RCAIALWFTL (115 aa). Histidine 587, aspartate 589, and histidine 659 together coordinate Fe cation. Residue arginine 669 is part of the active site. The tract at residues 699–736 is disordered; that stretch reads SPEEMDLSQEQPLDAQQGPPEPAQESLSGSESKPKDEL. Residues 733 to 736 carry the Prevents secretion from ER motif; the sequence is KDEL.

This sequence belongs to the leprecan family. It depends on Fe cation as a cofactor. L-ascorbate serves as cofactor. Post-translationally, O-glycosylated; chondroitin sulfate.

It localises to the endoplasmic reticulum. The protein localises to the secreted. Its subcellular location is the extracellular space. It is found in the extracellular matrix. It carries out the reaction L-prolyl-[collagen] + 2-oxoglutarate + O2 = trans-3-hydroxy-L-prolyl-[collagen] + succinate + CO2. Its function is as follows. Basement membrane-associated chondroitin sulfate proteoglycan (CSPG). Has prolyl 3-hydroxylase activity catalyzing the post-translational formation of 3-hydroxyproline in -Xaa-Pro-Gly- sequences in collagens, especially types IV and V. May be involved in the secretory pathway of cells. Has growth suppressive activity in fibroblasts. This is Prolyl 3-hydroxylase 1 from Homo sapiens (Human).